The sequence spans 304 residues: MLDRIKIALQHLLPKVWLTQLAGWGADRQAGMLTKLVIDLFARIYKVNMQEAQQPDTASYRSFNDFFVRPLKPGIRPVDPLPNRLVFPADGAISQLGAIDDDRILQAKQHDYTLEALLAGNYIISDLFRDGLFVTTYLSPRDYHRVHMPCDGILRDMIYVPGDLFSVNPLTAANVPNLFARNERVICLFDTPFGPMVQILVGATIVGSIETVWAGVVTPPREGIIKRWAYPMEGEGAVILEKGDEMGRFKLGSTVINLFAKDRVQLMPGLASQSVTRMGEAMAEALDEDILARMSANDDTDTTP.

Residues D90, H147, and S253 each act as charge relay system; for autoendoproteolytic cleavage activity in the active site. Catalysis depends on S253, which acts as the Schiff-base intermediate with substrate; via pyruvic acid; for decarboxylase activity. S253 carries the post-translational modification Pyruvic acid (Ser); by autocatalysis.

It belongs to the phosphatidylserine decarboxylase family. PSD-B subfamily. Prokaryotic type I sub-subfamily. As to quaternary structure, heterodimer of a large membrane-associated beta subunit and a small pyruvoyl-containing alpha subunit. Pyruvate is required as a cofactor. In terms of processing, is synthesized initially as an inactive proenzyme. Formation of the active enzyme involves a self-maturation process in which the active site pyruvoyl group is generated from an internal serine residue via an autocatalytic post-translational modification. Two non-identical subunits are generated from the proenzyme in this reaction, and the pyruvate is formed at the N-terminus of the alpha chain, which is derived from the carboxyl end of the proenzyme. The autoendoproteolytic cleavage occurs by a canonical serine protease mechanism, in which the side chain hydroxyl group of the serine supplies its oxygen atom to form the C-terminus of the beta chain, while the remainder of the serine residue undergoes an oxidative deamination to produce ammonia and the pyruvoyl prosthetic group on the alpha chain. During this reaction, the Ser that is part of the protease active site of the proenzyme becomes the pyruvoyl prosthetic group, which constitutes an essential element of the active site of the mature decarboxylase.

Its subcellular location is the cell membrane. The enzyme catalyses a 1,2-diacyl-sn-glycero-3-phospho-L-serine + H(+) = a 1,2-diacyl-sn-glycero-3-phosphoethanolamine + CO2. It participates in phospholipid metabolism; phosphatidylethanolamine biosynthesis; phosphatidylethanolamine from CDP-diacylglycerol: step 2/2. Its function is as follows. Catalyzes the formation of phosphatidylethanolamine (PtdEtn) from phosphatidylserine (PtdSer). The polypeptide is Phosphatidylserine decarboxylase proenzyme (Dickeya dadantii (strain 3937) (Erwinia chrysanthemi (strain 3937))).